The sequence spans 105 residues: V-type ATP synthase subunit F (105 aa).

The protein belongs to the V-ATPase F subunit family.

Functionally, produces ATP from ADP in the presence of a proton gradient across the membrane. This chain is V-type ATP synthase subunit F, found in Clostridium perfringens (strain 13 / Type A).